Consider the following 440-residue polypeptide: Diaminopimelate decarboxylase (440 aa).

At lysine 61 the chain carries N6-(pyridoxal phosphate)lysine. Residues glycine 234 and 275–278 each bind pyridoxal 5'-phosphate; that span reads EPGR. Substrate-binding residues include arginine 278, arginine 314, and tyrosine 318. Cysteine 348 acts as the Proton donor in catalysis. Positions 349 and 384 each coordinate substrate. Position 384 (tyrosine 384) interacts with pyridoxal 5'-phosphate. Over residues 421 to 431 the composition is skewed to low complexity; that stretch reads LAPELEPGPAL. The tract at residues 421–440 is disordered; sequence LAPELEPGPALSPRPSRDPR.

This sequence belongs to the Orn/Lys/Arg decarboxylase class-II family. LysA subfamily. In terms of assembly, homodimer. It depends on pyridoxal 5'-phosphate as a cofactor.

It carries out the reaction meso-2,6-diaminopimelate + H(+) = L-lysine + CO2. It functions in the pathway amino-acid biosynthesis; L-lysine biosynthesis via DAP pathway; L-lysine from DL-2,6-diaminopimelate: step 1/1. In terms of biological role, specifically catalyzes the decarboxylation of meso-diaminopimelate (meso-DAP) to L-lysine. This chain is Diaminopimelate decarboxylase, found in Streptomyces coelicolor (strain ATCC BAA-471 / A3(2) / M145).